The following is a 391-amino-acid chain: Probable dual-specificity RNA methyltransferase RlmN (391 aa).

The tract at residues 1 to 33 (MTTPLDTPTREPLPLAPAGPGKLVMSAPRRGKP) is disordered. Over residues 12–21 (PLPLAPAGPG) the composition is skewed to low complexity. The Proton acceptor role is filled by glutamate 124. Residues 130-373 (YKNRDTICIS…TTVRDTRGSD (244 aa)) enclose the Radical SAM core domain. Residues cysteine 137 and cysteine 378 are joined by a disulfide bond. Positions 144, 148, and 151 each coordinate [4Fe-4S] cluster. S-adenosyl-L-methionine is bound by residues 199–200 (GE), serine 233, 256–258 (SLH), and asparagine 335. The active-site S-methylcysteine intermediate is cysteine 378.

It belongs to the radical SAM superfamily. RlmN family. [4Fe-4S] cluster is required as a cofactor.

It is found in the cytoplasm. The enzyme catalyses adenosine(2503) in 23S rRNA + 2 reduced [2Fe-2S]-[ferredoxin] + 2 S-adenosyl-L-methionine = 2-methyladenosine(2503) in 23S rRNA + 5'-deoxyadenosine + L-methionine + 2 oxidized [2Fe-2S]-[ferredoxin] + S-adenosyl-L-homocysteine. It carries out the reaction adenosine(37) in tRNA + 2 reduced [2Fe-2S]-[ferredoxin] + 2 S-adenosyl-L-methionine = 2-methyladenosine(37) in tRNA + 5'-deoxyadenosine + L-methionine + 2 oxidized [2Fe-2S]-[ferredoxin] + S-adenosyl-L-homocysteine. In terms of biological role, specifically methylates position 2 of adenine 2503 in 23S rRNA and position 2 of adenine 37 in tRNAs. This is Probable dual-specificity RNA methyltransferase RlmN from Kineococcus radiotolerans (strain ATCC BAA-149 / DSM 14245 / SRS30216).